We begin with the raw amino-acid sequence, 318 residues long: MKIALVIFITLALAGCALLSLHMGVIPVPWRALLTDWQAGHEHYYVLMEYRLPRLLLALFVGAALAVAGVLIQGIVRNPLASPDILGVNHAASLASVGALLLMPSLPVMVLPLLAFAGGMAGLILLKMLAKTHQPMKLALTGVALSACWASLTDYLMLSRPQDVNNALLWLTGSLWGRDWSFVKIAIPLMILFLPLSLSFCRDLDLLALGDARATTLGVSVPHTRFWALLLAVAMTSTGVAACGPISFIGLVVPHMMRSITGGRHRRLLPVSALTGALLLVVADLLARIIHPPLELPVGVLTAIIGAPWFVWLLVRMR.

Residues 1-2 (MK) are Cytoplasmic-facing. The chain crosses the membrane as a helical span at residues 3–23 (IALVIFITLALAGCALLSLHM). The Periplasmic portion of the chain corresponds to 24-55 (GVIPVPWRALLTDWQAGHEHYYVLMEYRLPRL). A helical membrane pass occupies residues 56–76 (LLALFVGAALAVAGVLIQGIV). Topologically, residues 77–105 (RNPLASPDILGVNHAASLASVGALLLMPS) are cytoplasmic. A helical membrane pass occupies residues 106-126 (LPVMVLPLLAFAGGMAGLILL). Residues 127 to 137 (KMLAKTHQPMK) lie on the Periplasmic side of the membrane. A helical transmembrane segment spans residues 138 to 158 (LALTGVALSACWASLTDYLML). The Cytoplasmic portion of the chain corresponds to 159–179 (SRPQDVNNALLWLTGSLWGRD). Residues 180-200 (WSFVKIAIPLMILFLPLSLSF) traverse the membrane as a helical segment. Topologically, residues 201–225 (CRDLDLLALGDARATTLGVSVPHTR) are periplasmic. The helical transmembrane segment at 226-246 (FWALLLAVAMTSTGVAACGPI) threads the bilayer. The Cytoplasmic portion of the chain corresponds to 247–269 (SFIGLVVPHMMRSITGGRHRRLL). The helical transmembrane segment at 270-290 (PVSALTGALLLVVADLLARII) threads the bilayer. The Periplasmic portion of the chain corresponds to 291-294 (HPPL). A helical transmembrane segment spans residues 295–315 (ELPVGVLTAIIGAPWFVWLLV). Topologically, residues 316–318 (RMR) are cytoplasmic.

Belongs to the binding-protein-dependent transport system permease family. FecCD subfamily. As to quaternary structure, the complex is composed of two ATP-binding proteins (FecE), two transmembrane proteins (FecC and FecD) and a solute-binding protein (FecB). Interacts with FecB.

It localises to the cell inner membrane. Its function is as follows. Part of the ABC transporter complex FecBCDE involved in citrate-dependent Fe(3+) uptake. Probably responsible for the translocation of the substrate across the membrane. The protein is Fe(3+) dicitrate transport system permease protein FecD of Escherichia coli (strain K12).